The sequence spans 417 residues: Gelsolin (417 aa).

One copy of the Gelsolin-like 4 repeat lies at 93 to 171 (KVPVLESHYG…VVQGKEPAHL (79 aa)). G107, D108, E138, D150, G155, P157, T187, N227, D228, E250, D331, D332, and E354 together coordinate Ca(2+). Gelsolin-like repeat units lie at residues 213–261 (RAVE…LKIL) and 316–392 (IEEV…PTFI).

It belongs to the villin/gelsolin family.

The protein localises to the cytoplasm. It localises to the cytoskeleton. Calcium-regulated, actin-modulating protein that binds to the plus (or barbed) ends of actin monomers or filaments, preventing monomer exchange (end-blocking or capping). It can promote the assembly of monomers into filaments (nucleation) as well as sever filaments already formed. Plays a role in ciliogenesis. The polypeptide is Gelsolin (gsn) (Xenopus laevis (African clawed frog)).